A 216-amino-acid polypeptide reads, in one-letter code: Uracil phosphoribosyltransferase (216 aa).

Residue 30-34 (KNLVR) participates in GTP binding. Residues Arg80, Arg105, and 140-148 (DPMIATAST) contribute to the 5-phospho-alpha-D-ribose 1-diphosphate site. Uracil contacts are provided by residues Ile203 and 208–210 (GDA). Asp209 provides a ligand contact to 5-phospho-alpha-D-ribose 1-diphosphate.

This sequence belongs to the UPRTase family. The cofactor is Mg(2+).

The catalysed reaction is UMP + diphosphate = 5-phospho-alpha-D-ribose 1-diphosphate + uracil. It functions in the pathway pyrimidine metabolism; UMP biosynthesis via salvage pathway; UMP from uracil: step 1/1. With respect to regulation, allosterically activated by GTP. Its function is as follows. Catalyzes the conversion of uracil and 5-phospho-alpha-D-ribose 1-diphosphate (PRPP) to UMP and diphosphate. The sequence is that of Uracil phosphoribosyltransferase from Saccharolobus islandicus (strain M.16.4 / Kamchatka #3) (Sulfolobus islandicus).